We begin with the raw amino-acid sequence, 415 residues long: [Pyruvate dehydrogenase (acetyl-transferring)] kinase isozyme 3, mitochondrial (415 aa).

Positions 131-362 (IEYKEKFGFD…DAVIYLKALS (232 aa)) constitute a Histidine kinase domain. 247 to 254 (ELFKNSMR) contacts ATP. Lys278 is subject to N6-succinyllysine. Residues Asp287, 306-307 (ST), and 323-328 (GFGYGL) each bind ATP. The disordered stretch occupies residues 383–415 (TPEADDWSNPSSEPRDASKYKAKQDKIKSNRTF). The span at 395 to 415 (EPRDASKYKAKQDKIKSNRTF) shows a compositional bias: basic and acidic residues.

Belongs to the PDK/BCKDK protein kinase family. As to quaternary structure, homodimer. Interacts with the pyruvate dehydrogenase complex subunit DLAT, and is part of the multimeric pyruvate dehydrogenase complex that contains multiple copies of pyruvate dehydrogenase (E1), dihydrolipoamide acetyltransferase (DLAT, E2) and lipoamide dehydrogenase (DLD, E3).

It localises to the mitochondrion matrix. It carries out the reaction L-seryl-[pyruvate dehydrogenase E1 alpha subunit] + ATP = O-phospho-L-seryl-[pyruvate dehydrogenase E1 alpha subunit] + ADP + H(+). Its function is as follows. Inhibits pyruvate dehydrogenase activity by phosphorylation of the E1 subunit PDHA1, and thereby regulates glucose metabolism and aerobic respiration. Can also phosphorylate PDHA2. Decreases glucose utilization and increases fat metabolism in response to prolonged fasting, and as adaptation to a high-fat diet. Plays a role in glucose homeostasis and in maintaining normal blood glucose levels in function of nutrient levels and under starvation. Plays a role in the generation of reactive oxygen species. This chain is [Pyruvate dehydrogenase (acetyl-transferring)] kinase isozyme 3, mitochondrial (Pdk3), found in Mus musculus (Mouse).